We begin with the raw amino-acid sequence, 940 residues long: UvrABC system protein A (940 aa).

Residue 31-38 participates in ATP binding; that stretch reads GLSGSGKS. The C4-type zinc finger occupies 252-279; sequence CPHCGYSMQELEPRLFSFNNPAGACGTC. ABC transporter domains follow at residues 309–586 and 606–936; these read WDQK…PDSL and RDKN…RFLK. Residue 639–646 participates in ATP binding; that stretch reads GVSGSGKS. The C4-type zinc finger occupies 739 to 765; it reads CEACQGDGVIKVEMHFLPDVYVPCDVC.

This sequence belongs to the ABC transporter superfamily. UvrA family. Forms a heterotetramer with UvrB during the search for lesions.

It is found in the cytoplasm. In terms of biological role, the UvrABC repair system catalyzes the recognition and processing of DNA lesions. UvrA is an ATPase and a DNA-binding protein. A damage recognition complex composed of 2 UvrA and 2 UvrB subunits scans DNA for abnormalities. When the presence of a lesion has been verified by UvrB, the UvrA molecules dissociate. This chain is UvrABC system protein A, found in Vibrio vulnificus (strain CMCP6).